Reading from the N-terminus, the 232-residue chain is 2,3,4,5-tetrahydropyridine-2,6-dicarboxylate N-acetyltransferase (232 aa).

Belongs to the transferase hexapeptide repeat family. DapH subfamily.

It catalyses the reaction (S)-2,3,4,5-tetrahydrodipicolinate + acetyl-CoA + H2O = L-2-acetamido-6-oxoheptanedioate + CoA. It functions in the pathway amino-acid biosynthesis; L-lysine biosynthesis via DAP pathway; LL-2,6-diaminopimelate from (S)-tetrahydrodipicolinate (acetylase route): step 1/3. In terms of biological role, catalyzes the transfer of an acetyl group from acetyl-CoA to tetrahydrodipicolinate. This chain is 2,3,4,5-tetrahydropyridine-2,6-dicarboxylate N-acetyltransferase, found in Streptococcus suis (strain 98HAH33).